A 75-amino-acid chain; its full sequence is Small ribosomal subunit protein bS18 (75 aa).

Belongs to the bacterial ribosomal protein bS18 family. As to quaternary structure, part of the 30S ribosomal subunit. Forms a tight heterodimer with protein bS6.

Functionally, binds as a heterodimer with protein bS6 to the central domain of the 16S rRNA, where it helps stabilize the platform of the 30S subunit. The protein is Small ribosomal subunit protein bS18 of Psychrobacter sp. (strain PRwf-1).